The sequence spans 285 residues: NAD kinase (285 aa).

The active-site Proton acceptor is D64. NAD(+) contacts are provided by residues 64-65, 138-139, R149, R166, D168, L176, 179-184, and Q238; these read DG, ND, and SGYTIS.

It belongs to the NAD kinase family. The cofactor is a divalent metal cation.

The protein resides in the cytoplasm. It catalyses the reaction NAD(+) + ATP = ADP + NADP(+) + H(+). Functionally, involved in the regulation of the intracellular balance of NAD and NADP, and is a key enzyme in the biosynthesis of NADP. Catalyzes specifically the phosphorylation on 2'-hydroxyl of the adenosine moiety of NAD to yield NADP. The polypeptide is NAD kinase (Lawsonia intracellularis (strain PHE/MN1-00)).